A 167-amino-acid chain; its full sequence is Small ribosomal subunit protein uS5 (167 aa).

The S5 DRBM domain occupies 12–75 (LQEKLVQVNR…EAARRNMIQV (64 aa)).

This sequence belongs to the universal ribosomal protein uS5 family. Part of the 30S ribosomal subunit. Contacts proteins S4 and S8.

In terms of biological role, with S4 and S12 plays an important role in translational accuracy. Located at the back of the 30S subunit body where it stabilizes the conformation of the head with respect to the body. This Alcanivorax borkumensis (strain ATCC 700651 / DSM 11573 / NCIMB 13689 / SK2) protein is Small ribosomal subunit protein uS5.